A 289-amino-acid chain; its full sequence is 3-methyl-2-oxobutanoate hydroxymethyltransferase (289 aa).

A compositionally biased stretch (polar residues) spans 1-15 (MSTTFQLDTSTSRAN). A disordered region spans residues 1–20 (MSTTFQLDTSTSRANPTPAP). Mg(2+) contacts are provided by Asp67 and Asp106. 3-methyl-2-oxobutanoate contacts are provided by residues 67 to 68 (DS), Asp106, and Lys136. Mg(2+) is bound at residue Glu138. Glu205 (proton acceptor) is an active-site residue.

This sequence belongs to the PanB family. As to quaternary structure, homodecamer; pentamer of dimers. Mg(2+) is required as a cofactor.

It localises to the cytoplasm. The catalysed reaction is 3-methyl-2-oxobutanoate + (6R)-5,10-methylene-5,6,7,8-tetrahydrofolate + H2O = 2-dehydropantoate + (6S)-5,6,7,8-tetrahydrofolate. The protein operates within cofactor biosynthesis; (R)-pantothenate biosynthesis; (R)-pantoate from 3-methyl-2-oxobutanoate: step 1/2. Its function is as follows. Catalyzes the reversible reaction in which hydroxymethyl group from 5,10-methylenetetrahydrofolate is transferred onto alpha-ketoisovalerate to form ketopantoate. The sequence is that of 3-methyl-2-oxobutanoate hydroxymethyltransferase from Novosphingobium aromaticivorans (strain ATCC 700278 / DSM 12444 / CCUG 56034 / CIP 105152 / NBRC 16084 / F199).